Consider the following 170-residue polypeptide: Peptide deformylase (170 aa).

Fe cation contacts are provided by Cys-94 and His-136. Residue Glu-137 is part of the active site. His-140 provides a ligand contact to Fe cation.

Belongs to the polypeptide deformylase family. The cofactor is Fe(2+).

It carries out the reaction N-terminal N-formyl-L-methionyl-[peptide] + H2O = N-terminal L-methionyl-[peptide] + formate. Functionally, removes the formyl group from the N-terminal Met of newly synthesized proteins. Requires at least a dipeptide for an efficient rate of reaction. N-terminal L-methionine is a prerequisite for activity but the enzyme has broad specificity at other positions. In Xylella fastidiosa (strain 9a5c), this protein is Peptide deformylase.